The following is a 150-amino-acid chain: Snaclec bothrojaracin subunit beta (150 aa).

The N-terminal stretch at 1-23 is a signal peptide; it reads MGRFIFVSFGLLVVFLSLSGTAA. 3 cysteine pairs are disulfide-bonded: Cys25-Cys36, Cys53-Cys146, and Cys123-Cys138. In terms of domain architecture, C-type lectin spans 32–147; it reads YEGSCYRVFE…CTKLEYFVCE (116 aa).

Belongs to the snaclec family. Heterodimer of subunits alpha and beta; disulfide-linked. In terms of tissue distribution, expressed by the venom gland.

The protein resides in the secreted. This potent antithrombotic agent acts in a calcium-independent manner. Exerts its anticoagulant effect by two distinct mechanisms. It binds to activated thrombin through exosite 1, blocking fibrinogen clotting, platelet activation, factor V activation and other effects, and it interacts with prothrombin (F2), decreasing its proteolytic activation -especially in the presence of factor Va. In vivo, intravenous injection before thrombosis induction causes a significant decrease in thrombus weight. Furthermore, BJC shows a prolonged effect by remaining in the plasma bound to prothrombin for at least 12 hours. This is Snaclec bothrojaracin subunit beta from Bothrops jararaca (Jararaca).